Here is a 526-residue protein sequence, read N- to C-terminus: Catalase (526 aa).

Residues 1-22 (MADDREKSTDQMKLWKEGRGSQ) are compositionally biased toward basic and acidic residues. The interval 1–29 (MADDREKSTDQMKLWKEGRGSQRPDVLTT) is disordered. Residues His-75 and Asn-148 contribute to the active site. The NADP(+) site is built by His-194, Ser-201, Arg-203, Asn-213, Lys-237, Trp-303, His-305, and Lys-306. Position 358 (Tyr-358) interacts with heme.

This sequence belongs to the catalase family. As to quaternary structure, homotetramer. The cofactor is heme. Requires NADP(+) as cofactor.

Its subcellular location is the peroxisome matrix. The enzyme catalyses 2 H2O2 = O2 + 2 H2O. Catalyzes the degradation of hydrogen peroxide (H(2)O(2)) generated by peroxisomal oxidases to water and oxygen, thereby protecting cells from the toxic effects of hydrogen peroxide. The chain is Catalase (cat) from Danio rerio (Zebrafish).